Consider the following 416-residue polypeptide: UDP-N-acetylmuramoylalanine--D-glutamate ligase (416 aa).

108–114 (GTTGKTT) contacts ATP.

Belongs to the MurCDEF family.

It localises to the cytoplasm. The enzyme catalyses UDP-N-acetyl-alpha-D-muramoyl-L-alanine + D-glutamate + ATP = UDP-N-acetyl-alpha-D-muramoyl-L-alanyl-D-glutamate + ADP + phosphate + H(+). It participates in cell wall biogenesis; peptidoglycan biosynthesis. Cell wall formation. Catalyzes the addition of glutamate to the nucleotide precursor UDP-N-acetylmuramoyl-L-alanine (UMA). The protein is UDP-N-acetylmuramoylalanine--D-glutamate ligase of Chlamydia trachomatis serovar L2b (strain UCH-1/proctitis).